The chain runs to 89 residues: Small ribosomal subunit protein uS14 (89 aa).

It belongs to the universal ribosomal protein uS14 family. As to quaternary structure, part of the 30S ribosomal subunit. Contacts proteins S3 and S10.

Its function is as follows. Binds 16S rRNA, required for the assembly of 30S particles and may also be responsible for determining the conformation of the 16S rRNA at the A site. This is Small ribosomal subunit protein uS14 from Chlorobium chlorochromatii (strain CaD3).